Here is a 135-residue protein sequence, read N- to C-terminus: ATP synthase epsilon chain, chloroplastic (135 aa).

It belongs to the ATPase epsilon chain family. F-type ATPases have 2 components, CF(1) - the catalytic core - and CF(0) - the membrane proton channel. CF(1) has five subunits: alpha(3), beta(3), gamma(1), delta(1), epsilon(1). CF(0) has three main subunits: a, b and c.

The protein resides in the plastid. The protein localises to the chloroplast thylakoid membrane. Functionally, produces ATP from ADP in the presence of a proton gradient across the membrane. The sequence is that of ATP synthase epsilon chain, chloroplastic from Stigeoclonium helveticum (Green alga).